Consider the following 253-residue polypeptide: DNA repair protein RecO (253 aa).

It belongs to the RecO family.

In terms of biological role, involved in DNA repair and RecF pathway recombination. The polypeptide is DNA repair protein RecO (Dehalococcoides mccartyi (strain ATCC BAA-2100 / JCM 16839 / KCTC 5957 / BAV1)).